A 131-amino-acid polypeptide reads, in one-letter code: Bacteriohemerythrin (131 aa).

Residues H22, H58, E62, H77, H81, H117, and D122 each coordinate Fe cation.

It belongs to the hemerythrin family. In terms of assembly, monomer.

Its function is as follows. Oxygen-binding protein. May be involved in a storage mechanism or for delivery to oxygen-requiring enzymes. The oxygen-binding site contains two iron atoms. This Methylococcus capsulatus (strain ATCC 33009 / NCIMB 11132 / Bath) protein is Bacteriohemerythrin.